A 66-amino-acid polypeptide reads, in one-letter code: Photosystem II reaction center protein H (66 aa).

Residues 27-47 (GAVPIMTVIGLLLLVFLVILL) form a helical membrane-spanning segment.

It belongs to the PsbH family. As to quaternary structure, PSII is composed of 1 copy each of membrane proteins PsbA, PsbB, PsbC, PsbD, PsbE, PsbF, PsbH, PsbI, PsbJ, PsbK, PsbL, PsbM, PsbT, PsbX, PsbY, Psb30/Ycf12, peripheral proteins PsbO, CyanoQ (PsbQ), PsbU, PsbV and a large number of cofactors. It forms dimeric complexes.

The protein localises to the cellular thylakoid membrane. Functionally, one of the components of the core complex of photosystem II (PSII), required for its stability and/or assembly. PSII is a light-driven water:plastoquinone oxidoreductase that uses light energy to abstract electrons from H(2)O, generating O(2) and a proton gradient subsequently used for ATP formation. It consists of a core antenna complex that captures photons, and an electron transfer chain that converts photonic excitation into a charge separation. This chain is Photosystem II reaction center protein H, found in Prochlorococcus marinus (strain MIT 9515).